A 449-amino-acid chain; its full sequence is Probable phosphoglucosamine mutase (449 aa).

Ser96 acts as the Phosphoserine intermediate in catalysis. The Mg(2+) site is built by Ser96, Asp233, Asp235, and Asp237. Position 96 is a phosphoserine (Ser96).

The protein belongs to the phosphohexose mutase family. Requires Mg(2+) as cofactor. In terms of processing, activated by phosphorylation.

It catalyses the reaction alpha-D-glucosamine 1-phosphate = D-glucosamine 6-phosphate. Catalyzes the conversion of glucosamine-6-phosphate to glucosamine-1-phosphate. Does not display phosphoglucomutase (PGM) or phosphomannomutase (PMM) activities. The chain is Probable phosphoglucosamine mutase (glmM) from Thermococcus kodakarensis (strain ATCC BAA-918 / JCM 12380 / KOD1) (Pyrococcus kodakaraensis (strain KOD1)).